The primary structure comprises 335 residues: MSKRKAPQETLNGGITDMLTELANFEKNVNQAIHKYNAYRKAASVIAKYPHKIKSGAEAKKLPGVGTKIAEKIDEFLATGKLRKLEKIRQDDTSSSINFLTRVSGIGPSAARKFVDEGIKTLEDLRKNEDKLNHHQRIGLKYFEDFEKRIPREEMLQMQDIVLSEVKKVDSEYIATVCGSFRRGAESSGDMDVLLTHPSFTSESAKQPKLLHRVVEQLQKVRFITDTLSKGETKFMGVCQLPSKNDEKEYPHRRIDIRLIPKDQYYCGVLYFTGSDIFNKNMRAHALEKGFTINEYTIRPLGVTGVAGEPLPVDSEKDIFDYIQWKYREPKDRSE.

Residue K41 forms a Glycyl lysine isopeptide (Lys-Gly) (interchain with G-Cter in ubiquitin) linkage. K60 is a K(+) binding site. Na(+) is bound at residue K60. A Glycyl lysine isopeptide (Lys-Gly) (interchain with G-Cter in ubiquitin) cross-link involves residue K61. K(+) contacts are provided by L62 and V65. Residues L62 and V65 each coordinate Na(+). K72 functions as the Nucleophile; Schiff-base intermediate with DNA; for 5'-dRP lyase activity in the catalytic mechanism. K72 is modified (N6-acetyllysine). K81 is covalently cross-linked (Glycyl lysine isopeptide (Lys-Gly) (interchain with G-Cter in ubiquitin)). An Omega-N-methylarginine; by PRMT6 modification is found at R83. The K(+) site is built by T101, V103, and I106. The Na(+) site is built by T101, V103, and I106. A 2'-deoxyribonucleoside 5'-triphosphate is bound at residue R149. R152 carries the omega-N-methylarginine; by PRMT6 modification. A 2'-deoxyribonucleoside 5'-triphosphate is bound by residues S180, R183, G189, and D190. The DNA-binding stretch occupies residues 183-192; that stretch reads RGAESSGDMD. Mg(2+) contacts are provided by D190, D192, and D256.

Belongs to the DNA polymerase type-X family. In terms of assembly, monomer. Binds single-stranded DNA (ssDNA). Interacts with APEX1, LIG1, LIG3, FEN1, PCNA and XRCC1. Interacts with HUWE1/ARF-BP1, STUB1/CHIP and USP47. Interacts with FAM168A. Mg(2+) is required as a cofactor. Post-translationally, methylation by PRMT6 stimulates the polymerase activity by enhancing DNA binding and processivity. Ubiquitinated at Lys-41, Lys-61 and Lys-81: monoubiquitinated by HUWE1/ARF-BP1. Monoubiquitinated protein is then the target of STUB1/CHIP, which catalyzes polyubiquitination from monoubiquitin, leading to degradation by the proteasome. USP47 mediates the deubiquitination of monoubiquitinated protein, preventing polyubiquitination by STUB1/CHIP and its subsequent degradation.

The protein resides in the nucleus. It is found in the cytoplasm. It carries out the reaction DNA(n) + a 2'-deoxyribonucleoside 5'-triphosphate = DNA(n+1) + diphosphate. The enzyme catalyses a 5'-end 2'-deoxyribose-2'-deoxyribonucleotide-DNA = (2E,4S)-4-hydroxypenten-2-al-5-phosphate + a 5'-end 5'-phospho-2'-deoxyribonucleoside-DNA + H(+). It catalyses the reaction 2'-deoxyribonucleotide-(2'-deoxyribose 5'-phosphate)-2'-deoxyribonucleotide-DNA = a 3'-end 2'-deoxyribonucleotide-(2,3-dehydro-2,3-deoxyribose 5'-phosphate)-DNA + a 5'-end 5'-phospho-2'-deoxyribonucleoside-DNA + H(+). Repair polymerase that plays a key role in base-excision repair. During this process, the damaged base is excised by specific DNA glycosylases, the DNA backbone is nicked at the abasic site by an apurinic/apyrimidic (AP) endonuclease, and POLB removes 5'-deoxyribose-phosphate from the preincised AP site acting as a 5'-deoxyribose-phosphate lyase (5'-dRP lyase); through its DNA polymerase activity, it adds one nucleotide to the 3' end of the arising single-nucleotide gap. Conducts 'gap-filling' DNA synthesis in a stepwise distributive fashion rather than in a processive fashion as for other DNA polymerases. It is also able to cleave sugar-phosphate bonds 3' to an intact AP site, acting as an AP lyase. The protein is DNA polymerase beta (POLB) of Bos taurus (Bovine).